The chain runs to 623 residues: UvrABC system protein C (623 aa).

In terms of domain architecture, GIY-YIG spans 12-91 (PSPGVYLMKS…IKQHRPKYNI (80 aa)). Residues 201–236 (TEVARLYRSKMNLAAEQMRYEDAARYRDLLRAIEVT) form the UVR domain. The segment at 603–623 (RLHGSPLPNPPPPGEGAMDRK) is disordered.

It belongs to the UvrC family. Interacts with UvrB in an incision complex.

The protein localises to the cytoplasm. Functionally, the UvrABC repair system catalyzes the recognition and processing of DNA lesions. UvrC both incises the 5' and 3' sides of the lesion. The N-terminal half is responsible for the 3' incision and the C-terminal half is responsible for the 5' incision. The protein is UvrABC system protein C of Citrifermentans bemidjiense (strain ATCC BAA-1014 / DSM 16622 / JCM 12645 / Bem) (Geobacter bemidjiensis).